We begin with the raw amino-acid sequence, 140 residues long: Small ribosomal subunit protein uS12 (140 aa).

The disordered stretch occupies residues 1–20 (MPTINQLVRKGRQSKVVKSD). The residue at position 102 (Asp102) is a 3-methylthioaspartic acid. The disordered stretch occupies residues 121–140 (DGRMQGRSKYGTKRPKAAKK). Basic residues predominate over residues 130 to 140 (YGTKRPKAAKK).

Belongs to the universal ribosomal protein uS12 family. In terms of assembly, part of the 30S ribosomal subunit. Contacts proteins S8 and S17. May interact with IF1 in the 30S initiation complex.

Functionally, with S4 and S5 plays an important role in translational accuracy. In terms of biological role, interacts with and stabilizes bases of the 16S rRNA that are involved in tRNA selection in the A site and with the mRNA backbone. Located at the interface of the 30S and 50S subunits, it traverses the body of the 30S subunit contacting proteins on the other side and probably holding the rRNA structure together. The combined cluster of proteins S8, S12 and S17 appears to hold together the shoulder and platform of the 30S subunit. This Exiguobacterium sibiricum (strain DSM 17290 / CCUG 55495 / CIP 109462 / JCM 13490 / 255-15) protein is Small ribosomal subunit protein uS12.